We begin with the raw amino-acid sequence, 284 residues long: Formamidopyrimidine-DNA glycosylase (284 aa).

The active-site Schiff-base intermediate with DNA is Pro-2. The active-site Proton donor is Glu-3. Lys-58 functions as the Proton donor; for beta-elimination activity in the catalytic mechanism. Positions 101, 120, and 163 each coordinate DNA. The FPG-type zinc-finger motif lies at 248–284 (RVYDRENAPCVTAGCPDVVRRVVQSGRSSFYCPSCQR). Arg-274 acts as the Proton donor; for delta-elimination activity in catalysis.

This sequence belongs to the FPG family. In terms of assembly, monomer. It depends on Zn(2+) as a cofactor.

The catalysed reaction is Hydrolysis of DNA containing ring-opened 7-methylguanine residues, releasing 2,6-diamino-4-hydroxy-5-(N-methyl)formamidopyrimidine.. It catalyses the reaction 2'-deoxyribonucleotide-(2'-deoxyribose 5'-phosphate)-2'-deoxyribonucleotide-DNA = a 3'-end 2'-deoxyribonucleotide-(2,3-dehydro-2,3-deoxyribose 5'-phosphate)-DNA + a 5'-end 5'-phospho-2'-deoxyribonucleoside-DNA + H(+). Its function is as follows. Involved in base excision repair of DNA damaged by oxidation or by mutagenic agents. Acts as a DNA glycosylase that recognizes and removes damaged bases. Has a preference for oxidized purines, such as 7,8-dihydro-8-oxoguanine (8-oxoG). Has AP (apurinic/apyrimidinic) lyase activity and introduces nicks in the DNA strand. Cleaves the DNA backbone by beta-delta elimination to generate a single-strand break at the site of the removed base with both 3'- and 5'-phosphates. The protein is Formamidopyrimidine-DNA glycosylase of Dinoroseobacter shibae (strain DSM 16493 / NCIMB 14021 / DFL 12).